A 540-amino-acid chain; its full sequence is CTP synthase (540 aa).

The amidoligase domain stretch occupies residues 1 to 266 (MAVKYIFVTG…LTPIARHLEL (266 aa)). Ser14 is a binding site for CTP. A UTP-binding site is contributed by Ser14. Residues 15–20 (SLGKGI) and Asp72 each bind ATP. Mg(2+)-binding residues include Asp72 and Glu140. Residues 147-149 (DIE), 187-192 (KTKPTQ), and Lys223 contribute to the CTP site. Residues 187-192 (KTKPTQ) and Lys223 each bind UTP. One can recognise a Glutamine amidotransferase type-1 domain in the interval 291-540 (TIGFVGKYLS…VKETLAHKKT (250 aa)). Gly351 provides a ligand contact to L-glutamine. The active-site Nucleophile; for glutamine hydrolysis is the Cys378. L-glutamine contacts are provided by residues 379–382 (LGMQ), Glu402, and Arg470. Catalysis depends on residues His513 and Glu515.

It belongs to the CTP synthase family. In terms of assembly, homotetramer.

The enzyme catalyses UTP + L-glutamine + ATP + H2O = CTP + L-glutamate + ADP + phosphate + 2 H(+). The catalysed reaction is L-glutamine + H2O = L-glutamate + NH4(+). It carries out the reaction UTP + NH4(+) + ATP = CTP + ADP + phosphate + 2 H(+). Its pathway is pyrimidine metabolism; CTP biosynthesis via de novo pathway; CTP from UDP: step 2/2. Its activity is regulated as follows. Allosterically activated by GTP, when glutamine is the substrate; GTP has no effect on the reaction when ammonia is the substrate. The allosteric effector GTP functions by stabilizing the protein conformation that binds the tetrahedral intermediate(s) formed during glutamine hydrolysis. Inhibited by the product CTP, via allosteric rather than competitive inhibition. Its function is as follows. Catalyzes the ATP-dependent amination of UTP to CTP with either L-glutamine or ammonia as the source of nitrogen. Regulates intracellular CTP levels through interactions with the four ribonucleotide triphosphates. The chain is CTP synthase from Helicobacter hepaticus (strain ATCC 51449 / 3B1).